A 399-amino-acid chain; its full sequence is Acetate kinase (399 aa).

Asn10 is a Mg(2+) binding site. Residue Lys17 participates in ATP binding. Residue Arg91 participates in substrate binding. The active-site Proton donor/acceptor is Asp148. Residues 208-212, 283-285, and 331-335 contribute to the ATP site; these read HLGNG, DCR, and GIGEN. Glu385 lines the Mg(2+) pocket.

The protein belongs to the acetokinase family. In terms of assembly, homodimer. Mg(2+) is required as a cofactor. It depends on Mn(2+) as a cofactor.

Its subcellular location is the cytoplasm. It carries out the reaction acetate + ATP = acetyl phosphate + ADP. Its pathway is metabolic intermediate biosynthesis; acetyl-CoA biosynthesis; acetyl-CoA from acetate: step 1/2. In terms of biological role, catalyzes the formation of acetyl phosphate from acetate and ATP. Can also catalyze the reverse reaction. The protein is Acetate kinase of Shewanella sp. (strain ANA-3).